Here is a 144-residue protein sequence, read N- to C-terminus: Benzoylsuccinyl-CoA thiolase subunit BbsA (144 aa).

Cysteine 40, cysteine 43, cysteine 54, and cysteine 57 together coordinate Zn(2+).

The protein belongs to the BbsA family. Heterotetramer composed of two BbsA subunits and two BbsB subunits. BbsA forms homodimeric subcomplexes. Both BbsA and BbsB are essential for enzymatic activity.

It carries out the reaction (S)-2-benzoylsuccinyl-CoA + CoA = benzoyl-CoA + succinyl-CoA. It functions in the pathway xenobiotic degradation; toluene degradation. In terms of biological role, component of the BbsAB thiolase complex, which catalyzes the thiolytic cleavage of (S)-2-benzoylsuccinyl-CoA to succinyl-CoA and benzoyl-CoA, the final step of anaerobic toluene metabolism. The BbsA subunit critically contributes to an induced-fit process for productive binding of a CoA substrate into the active site of BbsB. The polypeptide is Benzoylsuccinyl-CoA thiolase subunit BbsA (Thauera aromatica).